The following is a 420-amino-acid chain: Serine hydroxymethyltransferase (420 aa).

Residues L121 and 125 to 127 (GHL) contribute to the (6S)-5,6,7,8-tetrahydrofolate site. K229 carries the N6-(pyridoxal phosphate)lysine modification.

It belongs to the SHMT family. Homodimer. Pyridoxal 5'-phosphate is required as a cofactor.

Its subcellular location is the cytoplasm. The enzyme catalyses (6R)-5,10-methylene-5,6,7,8-tetrahydrofolate + glycine + H2O = (6S)-5,6,7,8-tetrahydrofolate + L-serine. The protein operates within one-carbon metabolism; tetrahydrofolate interconversion. Its pathway is amino-acid biosynthesis; glycine biosynthesis; glycine from L-serine: step 1/1. Catalyzes the reversible interconversion of serine and glycine with tetrahydrofolate (THF) serving as the one-carbon carrier. This reaction serves as the major source of one-carbon groups required for the biosynthesis of purines, thymidylate, methionine, and other important biomolecules. Also exhibits THF-independent aldolase activity toward beta-hydroxyamino acids, producing glycine and aldehydes, via a retro-aldol mechanism. This chain is Serine hydroxymethyltransferase, found in Glaesserella parasuis serovar 5 (strain SH0165) (Haemophilus parasuis).